The chain runs to 188 residues: Elongation factor P (188 aa).

It belongs to the elongation factor P family.

The protein localises to the cytoplasm. It participates in protein biosynthesis; polypeptide chain elongation. Involved in peptide bond synthesis. Stimulates efficient translation and peptide-bond synthesis on native or reconstituted 70S ribosomes in vitro. Probably functions indirectly by altering the affinity of the ribosome for aminoacyl-tRNA, thus increasing their reactivity as acceptors for peptidyl transferase. In Rickettsia typhi (strain ATCC VR-144 / Wilmington), this protein is Elongation factor P.